Reading from the N-terminus, the 419-residue chain is Carboxypeptidase A1 (419 aa).

The signal sequence occupies residues 1–16 (MKRLLILSLLLEAVCG). A propeptide spans 17–110 (NENFVGHQVL…KQQMSAFQAR (94 aa)) (activation peptide). Positions 121-414 (TYHTLDEIYE…LALLTIMDHT (294 aa)) constitute a Peptidase M14 domain. Zn(2+) contacts are provided by H179 and E182. Substrate contacts are provided by residues 179-182 (HSRE), R237, and 254-255 (NR). Residues C248 and C271 are joined by a disulfide bond. Residue H306 participates in Zn(2+) binding. Residues 307–308 (SY) and Y358 each bind substrate. E380 functions as the Proton donor/acceptor in the catalytic mechanism.

It belongs to the peptidase M14 family. Monomer. May form a complex with proelastase 2. Zn(2+) is required as a cofactor.

It is found in the secreted. The catalysed reaction is Release of a C-terminal amino acid, but little or no action with -Asp, -Glu, -Arg, -Lys or -Pro.. The enzyme catalyses leukotriene C4 + H2O = leukotriene F4 + glycine. Functionally, carboxypeptidase that catalyzes the release of a C-terminal amino acid, but has little or no action with -Asp, -Glu, -Arg, -Lys or -Pro. Catalyzes the conversion of leukotriene C4 to leukotriene F4 via the hydrolysis of an amide bond. This chain is Carboxypeptidase A1, found in Rattus norvegicus (Rat).